Here is a 141-residue protein sequence, read N- to C-terminus: Protein MGF 100-2L (141 aa).

It belongs to the asfivirus MGF 100 family.

Plays a role in virus cell tropism, and may be required for efficient virus replication in macrophages. The protein is Protein MGF 100-2L of African swine fever virus (isolate Tick/Malawi/Lil 20-1/1983) (ASFV).